The sequence spans 414 residues: Peptidoglycan beta-N-acetylmuramidase NamZ (414 aa).

The signal sequence occupies residues 1-23 (MRKTIFAFLTGLMMFGTITAASA).

Belongs to the glycoside hydrolase 171 family. In terms of assembly, homodimer in solution.

The protein resides in the secreted. It carries out the reaction Hydrolysis of terminal, non-reducing N-acetylmuramic residues.. In terms of biological role, catalyzes the exo-lytic cleavage of beta-1,4-N-acetylmuramate (beta-1,4-MurNAc) from the non-reducing ends of peptidoglycan chains. Specifically hydrolyzes the natural, peptidoglycan-derived disaccharide MurNAc-GlcNAc and the artificial substrate para-nitrophenyl beta-N-acetylmuramic acid (pNP-MurNAc). Requires a MurNAc entity at the non-reducing end, and cannot cleave GlcNAc-MurNAc. Probably plays a role in cell wall turnover and recycling. The protein is Peptidoglycan beta-N-acetylmuramidase NamZ of Bacillus subtilis (strain 168).